We begin with the raw amino-acid sequence, 1024 residues long: PH and SEC7 domain-containing protein 1 (1024 aa).

The tract at residues 67–96 (CTPLRAPPSPHIAPSPWGPSSPTGQPPPGA) is disordered. Residues 71–95 (RAPPSPHIAPSPWGPSSPTGQPPPG) are compositionally biased toward pro residues. Phosphoserine is present on residues Ser-126 and Ser-156. Disordered stretches follow at residues 154–195 (STSD…LPNG), 250–277 (PSSGAKPPEQVLPSRGVGSKQGSGVAVG), 307–401 (REEA…GPDS), and 434–536 (PTQS…LDST). Acidic residues predominate over residues 348–365 (NEDDEAGGEEDVDDEVFE). Positions 445 to 463 (PPQPPAPRPDPPAPAPLAP) are enriched in pro residues. The segment covering 495–507 (PRKELPSPSHSED) has biased composition (basic and acidic residues). The SEC7 domain occupies 512-706 (GAAPLGSEPP…KALYSSIKNE (195 aa)). At Ser-720 the chain carries Phosphoserine. Residues 756-869 (AVYKHGALVR…WITRINVVAA (114 aa)) form the PH domain. Coiled-coil stretches lie at residues 898-924 (LSQEEQVRTHEAKLKAMASELREHRAA) and 956-983 (AALLRVKMKAASEELDTIEAALAQAGST). Positions 976–1024 (ALAQAGSTEDGCPPPHSSPSLRPKPTSQPRAQRPGSETRAGAGSTRPKP) are disordered.

It belongs to the PSD family. As to quaternary structure, interacts with ACTN1. Interacts (ARF6-bound form) with KCNK1; does not interact with KCNK1 in the absence of ARF6. As to expression, highest expression detected in brain and some expression detected also in uterus, stomach, ovary and intestine, with isoform 2 being expressed at the highest levels. In the brain, isoform 1 is highly expressed in the strata oriens, radiatum, lacunosum-moleculare of the hippocampal CA1-3 regions and the dentate molecular layer of the hippocampal formation, with lower levels detected in the neuronal cell layers and the stratum lucidum (at protein level). Not detected in tongue, thymus, spleen, lung, heart, liver and kidney.

Its subcellular location is the cell membrane. The protein resides in the cell projection. It is found in the ruffle. The protein localises to the ruffle membrane. It localises to the cleavage furrow. Functionally, guanine nucleotide exchange factor for ARF6. Isoform 2 and isoform 3 induce cytoskeletal remodeling, but lead to distinct morphological changes in HeLa cells: isoform 2 induces cell elongation and formation of actin-rich protrusions, whereas isoform 3 promotes the formation of membrane ruffles and loss of stress fibers. This chain is PH and SEC7 domain-containing protein 1 (Psd), found in Mus musculus (Mouse).